The sequence spans 156 residues: Small ribosomal subunit protein uS7 (156 aa).

The protein belongs to the universal ribosomal protein uS7 family. In terms of assembly, part of the 30S ribosomal subunit. Contacts proteins S9 and S11.

In terms of biological role, one of the primary rRNA binding proteins, it binds directly to 16S rRNA where it nucleates assembly of the head domain of the 30S subunit. Is located at the subunit interface close to the decoding center, probably blocks exit of the E-site tRNA. In Parafrankia sp. (strain EAN1pec), this protein is Small ribosomal subunit protein uS7.